Reading from the N-terminus, the 364-residue chain is Dihydroorotate dehydrogenase (quinone) (364 aa).

Residues 78–82 (AGFDK) and threonine 102 each bind FMN. Lysine 82 is a substrate binding site. Residue 127–131 (NRMGF) coordinates substrate. Residues asparagine 156 and asparagine 189 each contribute to the FMN site. Asparagine 189 contacts substrate. Residue serine 192 is the Nucleophile of the active site. Residue asparagine 194 participates in substrate binding. Lysine 227 and threonine 255 together coordinate FMN. Substrate is bound at residue 256-257 (NT). FMN contacts are provided by residues glycine 285, glycine 314, and 335 to 336 (YT).

The protein belongs to the dihydroorotate dehydrogenase family. Type 2 subfamily. Monomer. The cofactor is FMN.

The protein localises to the cell membrane. The enzyme catalyses (S)-dihydroorotate + a quinone = orotate + a quinol. It participates in pyrimidine metabolism; UMP biosynthesis via de novo pathway; orotate from (S)-dihydroorotate (quinone route): step 1/1. Functionally, catalyzes the conversion of dihydroorotate to orotate with quinone as electron acceptor. In Thermosynechococcus vestitus (strain NIES-2133 / IAM M-273 / BP-1), this protein is Dihydroorotate dehydrogenase (quinone).